A 346-amino-acid polypeptide reads, in one-letter code: Melanoma-associated antigen B4 (346 aa).

Residues 1–18 (MPRGQKSKLRAREKRQRT) are compositionally biased toward basic residues. Positions 1-107 (MPRGQKSKLR…STSTERSLKD (107 aa)) are disordered. Residues 45 to 54 (VLRDTASSSL) show a composition bias toward polar residues. Residues 92–101 (ASSSQASTST) show a composition bias toward low complexity. The MAGE domain occupies 109-307 (LTRKTKMLVQ…NNFPLLYEEA (199 aa)). The segment at 311-346 (EEERAGARPRVAARRGTTAMTSAYSRATSSSSSQPM) is disordered. A compositionally biased stretch (low complexity) spans 318-346 (RPRVAARRGTTAMTSAYSRATSSSSSQPM).

As to expression, expressed in testis.

Its subcellular location is the cytoplasm. The protein is Melanoma-associated antigen B4 (MAGEB4) of Homo sapiens (Human).